The sequence spans 340 residues: Sulfotransferase ppzF (340 aa).

It functions in the pathway secondary metabolite biosynthesis. Functionally, sulfotransferase; part of the gene cluster that mediates the biosynthesis of pyrrolopyrazines, secondary metabolites showing insecticidal activity. The role of ppzF within the pathway has still to be determined. The single multifunctional NRPS ppzA is sufficient to produce peramine via condensation of 1-pyrroline-5-carboxylate and arginine, N-methylation of the alpha-amino group of arginine and reduction of the thioester and the cyclization to form an iminium ion resulting in release from the peptide synthetase. Deprotonation of this intermediate and oxidation of the pyrroline ring would give rise to peramine. In Epichloe species that produce only peramine, the peramine synthetase gene is not localized in a gene cluster, in contrast to Metarhizium species that contain additional pyrrolopyrazine biosynthesis genes. The 2-oxoglutarate-Fe(II) type oxidoreductase ppzC hydroxylates peramine to yield the newly identified compound 8-hydroxyperamine whereas ppzD converts L-proline into trans-4-hydroxy-L-proline, a precursor of peramine biosynthesis. This chain is Sulfotransferase ppzF, found in Metarhizium rileyi (strain RCEF 4871) (Nomuraea rileyi).